The chain runs to 245 residues: Phosphoribosylaminoimidazole-succinocarboxamide synthase (245 aa).

It belongs to the SAICAR synthetase family.

The enzyme catalyses 5-amino-1-(5-phospho-D-ribosyl)imidazole-4-carboxylate + L-aspartate + ATP = (2S)-2-[5-amino-1-(5-phospho-beta-D-ribosyl)imidazole-4-carboxamido]succinate + ADP + phosphate + 2 H(+). It functions in the pathway purine metabolism; IMP biosynthesis via de novo pathway; 5-amino-1-(5-phospho-D-ribosyl)imidazole-4-carboxamide from 5-amino-1-(5-phospho-D-ribosyl)imidazole-4-carboxylate: step 1/2. The sequence is that of Phosphoribosylaminoimidazole-succinocarboxamide synthase from Trichormus variabilis (strain ATCC 29413 / PCC 7937) (Anabaena variabilis).